The chain runs to 301 residues: Cytosolic sulfotransferase 3 (301 aa).

Position 53 to 58 (53 to 58 (KAGTTW)) interacts with 3'-phosphoadenylyl sulfate. Histidine 115 acts as the Proton acceptor in catalysis. 3'-phosphoadenylyl sulfate contacts are provided by residues arginine 137, serine 145, tyrosine 201, 235-240 (VQFDAM), and 263-265 (RKG).

Belongs to the sulfotransferase 1 family.

Its subcellular location is the cytoplasm. Its activity is regulated as follows. Inhibited by Hg(2+), Co(2+), Zn(2+), Cd(2+), Cu(2+) and Pb(2+) ions. Activated slightly by Mn(2+), Ca(2+) and Mg(2+) ions. Its function is as follows. Sulfotransferase that utilizes 3'-phospho-5'-adenylyl sulfate (PAPS) as sulfonate donor to catalyze the sulfate conjugation of a variety of xenobiotic and endogenous compounds, including dopamine, T3 (triiodo-L-thyronine), T4 (thyroxine), estrone, DHEA (dehydroepiandrosterone), flavonoids, isoflavonoids and other phenolic compounds. This chain is Cytosolic sulfotransferase 3, found in Danio rerio (Zebrafish).